Reading from the N-terminus, the 150-residue chain is Probable histone H2A.5 (150 aa).

Residues 1-12 (MESSQATTKPTR) show a composition bias toward low complexity. 2 disordered regions span residues 1-28 (MESS…SVSK) and 130-150 (KSTA…PKKA). The segment covering 131 to 150 (STASSSQAEKASATKSPKKA) has biased composition (polar residues). A Phosphoserine modification is found at S146. The SPKK motif signature appears at 146-149 (SPKK).

Belongs to the histone H2A family. In terms of assembly, the nucleosome is a histone octamer containing two molecules each of H2A, H2B, H3 and H4 assembled in one H3-H4 heterotetramer and two H2A-H2B heterodimers. The octamer wraps approximately 147 bp of DNA. Post-translationally, not ubiquitinated.

The protein resides in the nucleus. It localises to the chromosome. Core component of nucleosome. Nucleosomes wrap and compact DNA into chromatin, limiting DNA accessibility to the cellular machineries which require DNA as a template. Histones thereby play a central role in transcription regulation, DNA repair, DNA replication and chromosomal stability. DNA accessibility is regulated via a complex set of post-translational modifications of histones, also called histone code, and nucleosome remodeling. The protein is Probable histone H2A.5 of Arabidopsis thaliana (Mouse-ear cress).